A 107-amino-acid chain; its full sequence is Auxin-responsive protein SAUR50 (107 aa).

This sequence belongs to the ARG7 family. As to quaternary structure, interacts with BZR1. In terms of tissue distribution, expressed in cotyledons, leaves, flowers and siliques.

It localises to the cell membrane. Functionally, provide a mechanistic link between auxin and plasma membrane H(+)-ATPases (PM H(+)-ATPases, e.g. AHA1 and AHA2), and triggers PM H(+)-ATPases activity by promoting phosphorylation of their C-terminal autoinhibitory domain as a result of PP2C-D subfamily of type 2C phosphatases inhibition, thus leading to the acidification of the apoplast and the facilitation of solutes and water uptake to drive cell expansion. Triggers plant growth probably by promoting cell elongation. Regulates branch angles and bending. Effector of hormonal and environmental signals in plant growth. In Arabidopsis thaliana (Mouse-ear cress), this protein is Auxin-responsive protein SAUR50.